The primary structure comprises 69 residues: Putative membrane protein insertion efficiency factor (69 aa).

Belongs to the UPF0161 family.

It localises to the cell membrane. Could be involved in insertion of integral membrane proteins into the membrane. This Clostridium kluyveri (strain NBRC 12016) protein is Putative membrane protein insertion efficiency factor.